The following is a 144-amino-acid chain: Sirohydrochlorin cobaltochelatase (144 aa).

The Proton acceptor role is filled by H9. Residue H9 coordinates Co(2+). H9 lines the Ni(2+) pocket. Residues E45 and 70 to 75 (LAPGNH) contribute to the substrate site. H75 is a Co(2+) binding site. Position 75 (H75) interacts with Ni(2+). Residues 89 to 112 (GDDEGGHHHHHDHEHHHHHHDTTA) form a disordered region. The span at 95-108 (HHHHHDHEHHHHHH) shows a compositional bias: basic residues.

This sequence belongs to the CbiX family. CbiXS subfamily. In terms of assembly, homotetramer; dimer of dimers.

It carries out the reaction Co-sirohydrochlorin + 2 H(+) = sirohydrochlorin + Co(2+). It catalyses the reaction Ni-sirohydrochlorin + 2 H(+) = sirohydrochlorin + Ni(2+). Its pathway is cofactor biosynthesis; adenosylcobalamin biosynthesis; cob(II)yrinate a,c-diamide from sirohydrochlorin (anaerobic route): step 1/10. Functionally, catalyzes the insertion of Co(2+) into sirohydrochlorin as part of the anaerobic pathway to cobalamin biosynthesis. Involved in the biosynthesis of the unique nickel-containing tetrapyrrole coenzyme F430, the prosthetic group of methyl-coenzyme M reductase (MCR), which plays a key role in methanogenesis and anaerobic methane oxidation. Catalyzes the insertion of Ni(2+) into sirohydrochlorin to yield Ni-sirohydrochlorin. In Methanococcus maripaludis (strain DSM 14266 / JCM 13030 / NBRC 101832 / S2 / LL), this protein is Sirohydrochlorin cobaltochelatase.